The primary structure comprises 200 residues: LHFPL tetraspan subfamily member 6 protein (200 aa).

The signal sequence occupies residues Met1–Ser23. Helical transmembrane passes span Ile84 to Leu104, Gly123 to Trp143, and Ile166 to Trp186.

The protein belongs to the LHFP family.

It is found in the membrane. This chain is LHFPL tetraspan subfamily member 6 protein, found in Mus musculus (Mouse).